A 354-amino-acid chain; its full sequence is Inactive ADP-ribosyltransferase ARH2 (354 aa).

Residue Ser27 is modified to Phosphoserine.

Belongs to the ADP-ribosylglycohydrolase family.

The protein resides in the cytoplasm. It localises to the myofibril. Its subcellular location is the sarcomere. Required for myofibril assembly and outgrowth of the cardiac chambers in the developing heart. Appears to be catalytically inactive, showing no activity against O-acetyl-ADP-ribose. The chain is Inactive ADP-ribosyltransferase ARH2 (ADPRHL1) from Pongo abelii (Sumatran orangutan).